The following is a 436-amino-acid chain: MSESRKLFIKTYGCQMNVYDSERMAEALGAKGYVLTEVAEEADMVLLNTCHIREKAAEKVYSDLGRLRPLKVARPDLKIGVAGCVAQAEGEEILRRMPLVDLVVGPQSYHRLPDMLERTEGGARVIDTDFPEEDKFEHLPERKALRGPTAFLTVQEGCDKFCAFCVVPYTRGAEVSRPFARLMAEARALVEKGVREITLLGQNVNAWSNDGRGLGGLIRELARIDGLERLRYTTSHPNDMADDLIEAHGQEPKLMPYLHLPVQSGSDRILKAMNRKHAAEQYLRLVERIRAARPDILLTSDFIVGFPGETDADFEATLALIRAVGFGSAFSFKYSARPGTPAAEKPELPAELCDARLQTLQALLGEQQRAAQAAMVGRELGVLYEKAGRLPGQMVGKSDYLHAVHVEDPGARPGDLVRVRITASGPNSLAGERIGV.

The 117-residue stretch at 5–121 folds into the MTTase N-terminal domain; the sequence is RKLFIKTYGC…LPDMLERTEG (117 aa). [4Fe-4S] cluster contacts are provided by Cys-14, Cys-50, Cys-84, Cys-158, Cys-162, and Cys-165. Residues 144–373 enclose the Radical SAM core domain; the sequence is ALRGPTAFLT…LGEQQRAAQA (230 aa). A TRAM domain is found at 373 to 435; that stretch reads AAMVGRELGV…PNSLAGERIG (63 aa).

Belongs to the methylthiotransferase family. MiaB subfamily. Monomer. [4Fe-4S] cluster is required as a cofactor.

The protein localises to the cytoplasm. The enzyme catalyses N(6)-dimethylallyladenosine(37) in tRNA + (sulfur carrier)-SH + AH2 + 2 S-adenosyl-L-methionine = 2-methylsulfanyl-N(6)-dimethylallyladenosine(37) in tRNA + (sulfur carrier)-H + 5'-deoxyadenosine + L-methionine + A + S-adenosyl-L-homocysteine + 2 H(+). Functionally, catalyzes the methylthiolation of N6-(dimethylallyl)adenosine (i(6)A), leading to the formation of 2-methylthio-N6-(dimethylallyl)adenosine (ms(2)i(6)A) at position 37 in tRNAs that read codons beginning with uridine. This Cereibacter sphaeroides (strain ATCC 17025 / ATH 2.4.3) (Rhodobacter sphaeroides) protein is tRNA-2-methylthio-N(6)-dimethylallyladenosine synthase.